The following is a 408-amino-acid chain: 8-amino-7-oxononanoate synthase (408 aa).

Arginine 20 provides a ligand contact to substrate. 119–120 is a pyridoxal 5'-phosphate binding site; it reads GY. Position 144 (histidine 144) interacts with substrate. Residues serine 190, histidine 218, and threonine 246 each contribute to the pyridoxal 5'-phosphate site. Lysine 249 carries the N6-(pyridoxal phosphate)lysine modification. Threonine 372 is a substrate binding site.

Belongs to the class-II pyridoxal-phosphate-dependent aminotransferase family. BioF subfamily. In terms of assembly, homodimer. Pyridoxal 5'-phosphate is required as a cofactor.

The enzyme catalyses 6-carboxyhexanoyl-[ACP] + L-alanine + H(+) = (8S)-8-amino-7-oxononanoate + holo-[ACP] + CO2. It functions in the pathway cofactor biosynthesis; biotin biosynthesis. Its function is as follows. Catalyzes the decarboxylative condensation of pimeloyl-[acyl-carrier protein] and L-alanine to produce 8-amino-7-oxononanoate (AON), [acyl-carrier protein], and carbon dioxide. In Leptothrix cholodnii (strain ATCC 51168 / LMG 8142 / SP-6) (Leptothrix discophora (strain SP-6)), this protein is 8-amino-7-oxononanoate synthase.